We begin with the raw amino-acid sequence, 89 residues long: Small ribosomal subunit protein uS15 (89 aa).

The protein belongs to the universal ribosomal protein uS15 family. As to quaternary structure, part of the 30S ribosomal subunit. Forms a bridge to the 50S subunit in the 70S ribosome, contacting the 23S rRNA.

Functionally, one of the primary rRNA binding proteins, it binds directly to 16S rRNA where it helps nucleate assembly of the platform of the 30S subunit by binding and bridging several RNA helices of the 16S rRNA. Forms an intersubunit bridge (bridge B4) with the 23S rRNA of the 50S subunit in the ribosome. This Laribacter hongkongensis (strain HLHK9) protein is Small ribosomal subunit protein uS15.